The sequence spans 330 residues: Phenylalanine--tRNA ligase alpha subunit (330 aa).

Glu-257 contributes to the Mg(2+) binding site.

Belongs to the class-II aminoacyl-tRNA synthetase family. Phe-tRNA synthetase alpha subunit type 1 subfamily. As to quaternary structure, tetramer of two alpha and two beta subunits. The cofactor is Mg(2+).

The protein resides in the cytoplasm. The catalysed reaction is tRNA(Phe) + L-phenylalanine + ATP = L-phenylalanyl-tRNA(Phe) + AMP + diphosphate + H(+). In Nostoc punctiforme (strain ATCC 29133 / PCC 73102), this protein is Phenylalanine--tRNA ligase alpha subunit.